The chain runs to 230 residues: Potassium/proton antiporter CemA (230 aa).

4 consecutive transmembrane segments (helical) span residues 7–27, 106–126, 145–165, and 181–201; these read LPSFLYLVFIVLLPWGVSFSF, IILHFSTNIICLAILSGSFFL, LNDSIKAFFILLVTDFFVGFH, and LGWAPNELIFTIFVCSFPVIL.

Belongs to the CemA family.

It is found in the plastid. It localises to the chloroplast inner membrane. It catalyses the reaction K(+)(in) + H(+)(out) = K(+)(out) + H(+)(in). Contributes to K(+)/H(+) antiport activity by supporting proton efflux to control proton extrusion and homeostasis in chloroplasts in a light-dependent manner to modulate photosynthesis. Prevents excessive induction of non-photochemical quenching (NPQ) under continuous-light conditions. Indirectly promotes efficient inorganic carbon uptake into chloroplasts. The protein is Potassium/proton antiporter CemA of Zea mays (Maize).